The following is a 315-amino-acid chain: DNA-directed RNA polymerase subunit alpha (315 aa).

Residues 1–228 (MLEIEKPKIE…EHFKLFMTLT (228 aa)) are alpha N-terminal domain (alpha-NTD). An alpha C-terminal domain (alpha-CTD) region spans residues 245 to 315 (KEKVLEMTIE…LGLGLRKSED (71 aa)).

It belongs to the RNA polymerase alpha chain family. As to quaternary structure, homodimer. The RNAP catalytic core consists of 2 alpha, 1 beta, 1 beta' and 1 omega subunit. When a sigma factor is associated with the core the holoenzyme is formed, which can initiate transcription.

It catalyses the reaction RNA(n) + a ribonucleoside 5'-triphosphate = RNA(n+1) + diphosphate. Its function is as follows. DNA-dependent RNA polymerase catalyzes the transcription of DNA into RNA using the four ribonucleoside triphosphates as substrates. This Clostridium botulinum (strain Langeland / NCTC 10281 / Type F) protein is DNA-directed RNA polymerase subunit alpha.